The chain runs to 179 residues: DELTA-actitoxin-Afr1a (179 aa).

The interval serine 1–valine 29 is N-terminal alpha-helix that contributes to the pore. Arginine 31 is an an N-(acyl)-sphingosylphosphocholine binding site. N-acetyl-D-glucosamine 6-sulfate contacts are provided by tyrosine 51 and arginine 53. Residues arginine 53, serine 54, arginine 79, glycine 85, tyrosine 108, tyrosine 113, serine 114, tryptophan 116, tyrosine 133, tyrosine 137, tyrosine 138, arginine 144, and glycine 168 each contribute to the an N-(acyl)-sphingosylphosphocholine site. A trp-rich region, which is important for the binding to lipid membrane region spans residues serine 105 to arginine 120. Tyrosine 138 is an N-acetyl-D-glucosamine 6-sulfate binding site. The Cell attachment site, crucial for protein stability signature appears at arginine 144 to aspartate 146.

The protein belongs to the actinoporin family. Sea anemone subfamily. In terms of assembly, octamer or nonamer in membranes. Monomer in the soluble state.

The protein resides in the secreted. Its subcellular location is the nematocyst. The protein localises to the target cell membrane. In terms of biological role, pore-forming toxin (PFT) that consists of a crown-shaped octamer or nonamer that forms cation-selective hydrophilic pores of about 1.5 nm (inside) and 13 nm (outside). It causes cardiac stimulation and cytolysis (EC(50)=1.6 nM on erythrocytes). Interestingly, the Phe-16 is crucial for hemolysis. Pore formation is a multi-step process that involves specific recognition of membrane sphingomyelin (but neither cholesterol nor phosphatidylcholine) using aromatic rich region and adjacent phosphocholine (POC) binding site, firm binding to the membrane (mainly driven by hydrophobic interactions) accompanied by the transfer of the N-terminal region to the lipid-water interface and finally pore formation after oligomerization of monomers. It is probable that a dimeric form is an assembly intermediate before the complete oligomerization. The formation of stable pores occurs only in vesicles composed of DOPC/SM (there is no oligomerization when the PFT is treated with vesicles of DOPC or SM alone). The transmembrane pore displays 8 lateral perforations, one at each subunit-subunit interface, partially occupied by the acyl-chain region of a bridging lipid. Each pore contains 24 lipid molecules, firmly bound to each subunit, that is, 3 lipids (L1, L2, L3, L4 and/or L5) are associated to each subunit. Lipid L1 bridges 2 subunits, whereas lipids L2 and L3 bind to sites at single subunit. In Actinia fragacea (Strawberry anemone), this protein is DELTA-actitoxin-Afr1a.